The following is a 79-amino-acid chain: Sulfur carrier protein TusA (79 aa).

Residue cysteine 15 is the Cysteine persulfide intermediate of the active site.

It belongs to the sulfur carrier protein TusA family. As to quaternary structure, interacts with IscS.

It is found in the cytoplasm. Its pathway is tRNA modification. Its function is as follows. Sulfur carrier protein involved in sulfur trafficking in the cell. Part of a sulfur-relay system required for 2-thiolation during synthesis of 2-thiouridine of the modified wobble base 5-methylaminomethyl-2-thiouridine (mnm(5)s(2)U) in tRNA. Interacts with IscS and stimulates its cysteine desulfurase activity. Accepts an activated sulfur from IscS, which is then transferred to TusD, and thus determines the direction of sulfur flow from IscS to 2-thiouridine formation. Also appears to be involved in sulfur transfer for the biosynthesis of molybdopterin. The chain is Sulfur carrier protein TusA from Buchnera aphidicola subsp. Baizongia pistaciae (strain Bp).